Consider the following 56-residue polypeptide: Frontoxin I (56 aa).

4 cysteine pairs are disulfide-bonded: C3-C22, C17-C39, C41-C52, and C53-C56.

It belongs to the three-finger toxin family. Short-chain subfamily. Type I alpha-neurotoxin sub-subfamily. Expressed by the venom gland.

It localises to the secreted. In terms of biological role, binds to muscle nicotinic acetylcholine receptor (nAChR) and inhibit acetylcholine from binding to the receptor, thereby impairing neuromuscular transmission. This is Frontoxin I from Micrurus frontalis (Coral snake).